A 429-amino-acid polypeptide reads, in one-letter code: Phenylalanine--tRNA ligase, chloroplastic/mitochondrial (429 aa).

The transit peptide at 1 to 53 (MTVFSVQSTIFSRASVALLSSNGFKRFSFVSSFSSSAAYSPPKMRKRRYPIVS) directs the protein to the chloroplast and mitochondrion. A54 is subject to N-acetylalanine. Substrate contacts are provided by residues 163 to 166 (SAHQ), R185, 192 to 194 (THY), 199 to 201 (QME), E269, and F294. One can recognise an FDX-ACB domain in the interval 338–429 (SKYPPCYKDI…VQKKLNVELR (92 aa)).

This sequence belongs to the class-II aminoacyl-tRNA synthetase family. Monomer.

The protein localises to the plastid. It is found in the chloroplast stroma. It localises to the mitochondrion matrix. The enzyme catalyses tRNA(Phe) + L-phenylalanine + ATP = L-phenylalanyl-tRNA(Phe) + AMP + diphosphate + H(+). Functionally, is responsible for the charging of tRNA(Phe) with phenylalanine in mitochondrial translation. In Arabidopsis thaliana (Mouse-ear cress), this protein is Phenylalanine--tRNA ligase, chloroplastic/mitochondrial.